The primary structure comprises 103 residues: UPF0145 protein CYB_1351 (103 aa).

The protein belongs to the UPF0145 family.

This Synechococcus sp. (strain JA-2-3B'a(2-13)) (Cyanobacteria bacterium Yellowstone B-Prime) protein is UPF0145 protein CYB_1351.